Here is a 755-residue protein sequence, read N- to C-terminus: Leucine-rich repeat-containing protein 36 (755 aa).

2 LRR repeats span residues 51 to 72 (SLRS…QYLC) and 73 to 94 (SLQE…SRLQ). Positions 107–146 (NPVVRKDTDYRLFAVYTLQTLEKLDDRAVRDSERRAAKLH) constitute an LRRCT domain. Disordered stretches follow at residues 354–374 (GKNY…TTSH) and 448–517 (LPPG…PPIS). Basic and acidic residues predominate over residues 356-370 (NYREHSIKPSQDKKA). Over residues 498–510 (LSSDLGSLHGLSG) the composition is skewed to low complexity. A coiled-coil region spans residues 601–671 (VESLKQKLVK…ELTQLKRLEE (71 aa)). Positions 701–755 (YSGKSLLPPEKSHPLGRSSPFGKSTLSSSSPMVHDTGQYLIQSVSEADPEPSLWS) are disordered. A compositionally biased stretch (polar residues) spans 721–731 (FGKSTLSSSSP).

The polypeptide is Leucine-rich repeat-containing protein 36 (Lrrc36) (Mus musculus (Mouse)).